The primary structure comprises 98 residues: Integration host factor subunit alpha (98 aa).

The protein belongs to the bacterial histone-like protein family. In terms of assembly, heterodimer of an alpha and a beta chain.

This protein is one of the two subunits of integration host factor, a specific DNA-binding protein that functions in genetic recombination as well as in transcriptional and translational control. The chain is Integration host factor subunit alpha from Actinobacillus pleuropneumoniae serotype 5b (strain L20).